The following is a 200-amino-acid chain: Serine/arginine-rich splicing factor RSZ23 (200 aa).

An RRM domain is found at 2–71 (ARVYVGNLDP…NGWRVELSTK (70 aa)). The segment at 86-103 (MKCYECGEPGHFARECRL) adopts a CCHC-type zinc-finger fold. A disordered region spans residues 105-200 (IGSGGLGSGR…REESPYANNA (96 aa)). Residues 113-139 (GRRRSRSRSRSPRYRGRSRSRSPRYRR) are compositionally biased toward basic residues.

The protein belongs to the splicing factor SR family. Post-translationally, extensively phosphorylated on serine residues in the RS domain. Expressed in roots, leaves and immature seeds.

The protein localises to the nucleus. Involved in pre-mRNA splicing. In protoplast assay, enhances splicing efficiency of WAXY intron 1 and alters the selection of the 5'-splice sites by stimulating site 1 (proximal site). The chain is Serine/arginine-rich splicing factor RSZ23 (RSZ23) from Oryza sativa subsp. japonica (Rice).